We begin with the raw amino-acid sequence, 115 residues long: NADH-ubiquinone oxidoreductase chain 3 (115 aa).

A run of 3 helical transmembrane segments spans residues 3–23 (FMLT…IAFW), 55–75 (FFLV…LLPL), and 84–104 (LEVM…SLAY).

The protein belongs to the complex I subunit 3 family. As to quaternary structure, core subunit of respiratory chain NADH dehydrogenase (Complex I) which is composed of 45 different subunits. Interacts with TMEM186. Interacts with TMEM242.

The protein localises to the mitochondrion inner membrane. It catalyses the reaction a ubiquinone + NADH + 5 H(+)(in) = a ubiquinol + NAD(+) + 4 H(+)(out). Core subunit of the mitochondrial membrane respiratory chain NADH dehydrogenase (Complex I) which catalyzes electron transfer from NADH through the respiratory chain, using ubiquinone as an electron acceptor. Essential for the catalytic activity of complex I. The polypeptide is NADH-ubiquinone oxidoreductase chain 3 (Rhinolophus pumilus (Horseshoe bat)).